We begin with the raw amino-acid sequence, 167 residues long: Ubiquitin-conjugating enzyme E2 14 (167 aa).

Ala2 bears the N-acetylalanine mark. The 161-residue stretch at 5–165 folds into the UBC core domain; it reads QASLLLQKQL…VSRCVRRSQE (161 aa). Cys90 serves as the catalytic Glycyl thioester intermediate.

Belongs to the ubiquitin-conjugating enzyme family.

It catalyses the reaction S-ubiquitinyl-[E1 ubiquitin-activating enzyme]-L-cysteine + [E2 ubiquitin-conjugating enzyme]-L-cysteine = [E1 ubiquitin-activating enzyme]-L-cysteine + S-ubiquitinyl-[E2 ubiquitin-conjugating enzyme]-L-cysteine.. It functions in the pathway protein modification; protein ubiquitination. Accepts the ubiquitin from the E1 complex and catalyzes its covalent attachment to other proteins. Involved in the formation of multiubiquitin chains. Signal the protein for selective degradation. The sequence is that of Ubiquitin-conjugating enzyme E2 14 (UBC14) from Arabidopsis thaliana (Mouse-ear cress).